Consider the following 176-residue polypeptide: Siroheme decarboxylase alpha subunit (176 aa).

Residues methionine 1 to alanine 24 are disordered. Residues serine 12–alanine 24 show a composition bias toward low complexity.

This sequence belongs to the Ahb/Nir family. Forms a heterodimer composed of AhbA and AhbB. Also forms heterotetramers.

The enzyme catalyses siroheme + 2 H(+) = 12,18-didecarboxysiroheme + 2 CO2. It participates in porphyrin-containing compound metabolism; protoheme biosynthesis. Involved in siroheme-dependent heme b biosynthesis. Catalyzes the decarboxylation of siroheme into didecarboxysiroheme. This Nitratidesulfovibrio vulgaris (strain ATCC 29579 / DSM 644 / CCUG 34227 / NCIMB 8303 / VKM B-1760 / Hildenborough) (Desulfovibrio vulgaris) protein is Siroheme decarboxylase alpha subunit.